The sequence spans 207 residues: Large ribosomal subunit protein uL4 (207 aa).

The tract at residues 43–80 is disordered; that stretch reads RRRSGTAKSKGRSEVSGSTRKLYRQKGTGNARSGSVKS. Positions 69 to 78 are enriched in polar residues; the sequence is GTGNARSGSV.

This sequence belongs to the universal ribosomal protein uL4 family. Part of the 50S ribosomal subunit.

One of the primary rRNA binding proteins, this protein initially binds near the 5'-end of the 23S rRNA. It is important during the early stages of 50S assembly. It makes multiple contacts with different domains of the 23S rRNA in the assembled 50S subunit and ribosome. Its function is as follows. Forms part of the polypeptide exit tunnel. In Desulforapulum autotrophicum (strain ATCC 43914 / DSM 3382 / VKM B-1955 / HRM2) (Desulfobacterium autotrophicum), this protein is Large ribosomal subunit protein uL4.